Reading from the N-terminus, the 136-residue chain is Nucleoside diphosphate kinase (136 aa).

K9, F57, R85, T91, R102, and N112 together coordinate ATP. Residue H115 is the Pros-phosphohistidine intermediate of the active site.

The protein belongs to the NDK family. Homotetramer. It depends on Mg(2+) as a cofactor.

It localises to the cytoplasm. It catalyses the reaction a 2'-deoxyribonucleoside 5'-diphosphate + ATP = a 2'-deoxyribonucleoside 5'-triphosphate + ADP. The catalysed reaction is a ribonucleoside 5'-diphosphate + ATP = a ribonucleoside 5'-triphosphate + ADP. Functionally, major role in the synthesis of nucleoside triphosphates other than ATP. The ATP gamma phosphate is transferred to the NDP beta phosphate via a ping-pong mechanism, using a phosphorylated active-site intermediate. In Acetivibrio thermocellus (strain ATCC 27405 / DSM 1237 / JCM 9322 / NBRC 103400 / NCIMB 10682 / NRRL B-4536 / VPI 7372) (Clostridium thermocellum), this protein is Nucleoside diphosphate kinase.